The sequence spans 210 residues: T-cell surface glycoprotein CD8 beta chain (210 aa).

An N-terminal signal peptide occupies residues 1–21 (MQPGLWLLLATQLAALRGSSV). The 111-residue stretch at 22–132 (LQQAPGSVMV…ELTFGKGTRL (111 aa)) folds into the Ig-like V-type domain. Topologically, residues 22-170 (LQQAPGSVMV…VTQKGPSCGL (149 aa)) are extracellular. C41 and C116 form a disulfide bridge. N-linked (GlcNAc...) asparagine glycosylation occurs at N102. The tract at residues 139-161 (PTNSQPTKKPTPRKKMCRPPSPV) is disordered. A helical membrane pass occupies residues 171–191 (LTLGLLVAGVLVLLVSLGVAI). The Cytoplasmic segment spans residues 192–210 (HLYRLKRRARLRLLKQFYK).

In terms of assembly, forms disulfide-linked heterodimers with CD8A at the cell surface. Interacts with CD3D; this interaction couples TCR-CD3 with CD8. Interacts with LCK. In terms of processing, phosphorylated as a consequence of T-cell activation. Post-translationally, palmitoylated at the cytoplasmic tail and thereby targets the heterodimer CD8A/CD8B to lipid rafts unlike CD8A homodimers.

It localises to the cell membrane. Functionally, integral membrane glycoprotein that plays an essential role in the immune response and serves multiple functions in responses against both external and internal offenses. In T-cells, functions primarily as a coreceptor for MHC class I molecule:peptide complex. The antigens presented by class I peptides are derived from cytosolic proteins while class II derived from extracellular proteins. Interacts simultaneously with the T-cell receptor (TCR) and the MHC class I proteins presented by antigen presenting cells (APCs). In turn, recruits the Src kinase LCK to the vicinity of the TCR-CD3 complex. A palmitoylation site in the cytoplasmic tail of CD8B chain contributes to partitioning of CD8 into the plasma membrane lipid rafts where signaling proteins are enriched. Once LCK recruited, it initiates different intracellular signaling pathways by phosphorylating various substrates ultimately leading to lymphokine production, motility, adhesion and activation of cytotoxic T-lymphocytes (CTLs). Additionally, plays a critical role in thymic selection of CD8+ T-cells. In Felis catus (Cat), this protein is T-cell surface glycoprotein CD8 beta chain (CD8B).